The following is a 205-amino-acid chain: High frequency lysogenization protein HflD homolog (205 aa).

It belongs to the HflD family.

Its subcellular location is the cytoplasm. It is found in the cell inner membrane. The polypeptide is High frequency lysogenization protein HflD homolog (Vibrio vulnificus (strain CMCP6)).